Consider the following 450-residue polypeptide: ADP-specific phosphofructokinase (450 aa).

In terms of domain architecture, ADPK spans 1–449; the sequence is MIPEHLSIYT…FLTYLEFLKR (449 aa). Positions 260, 290, and 433 each coordinate Mg(2+). D433 functions as the Proton acceptor in the catalytic mechanism.

It belongs to the carbohydrate kinase PfkC family. It depends on Mg(2+) as a cofactor.

The protein localises to the cytoplasm. It carries out the reaction beta-D-fructose 6-phosphate + ADP = beta-D-fructose 1,6-bisphosphate + AMP + H(+). The protein operates within carbohydrate degradation; glycolysis. Functionally, catalyzes the phosphorylation of fructose 6-phosphate to fructose 1,6-bisphosphate using ADP as the phosphate donor. The protein is ADP-specific phosphofructokinase of Pyrococcus horikoshii (strain ATCC 700860 / DSM 12428 / JCM 9974 / NBRC 100139 / OT-3).